Consider the following 207-residue polypeptide: Small ribosomal subunit protein uS4c (207 aa).

In terms of domain architecture, S4 RNA-binding spans 92–155; it reads MRLDNILFRL…TYQSILSKRI (64 aa).

The protein belongs to the universal ribosomal protein uS4 family. In terms of assembly, part of the 30S ribosomal subunit. Contacts protein S5. The interaction surface between S4 and S5 is involved in control of translational fidelity.

The protein localises to the plastid. The protein resides in the chloroplast. Its function is as follows. One of the primary rRNA binding proteins, it binds directly to 16S rRNA where it nucleates assembly of the body of the 30S subunit. Functionally, with S5 and S12 plays an important role in translational accuracy. The sequence is that of Small ribosomal subunit protein uS4c (rps4) from Equisetum scirpoides (Dwarf-scouring rush).